The primary structure comprises 479 residues: Aryl-phospho-beta-D-glucosidase BglA (479 aa).

The active-site Proton donor is Glu-176. Glu-377 functions as the Nucleophile in the catalytic mechanism.

The protein belongs to the glycosyl hydrolase 1 family.

It carries out the reaction 6-phospho-beta-D-glucosyl-(1-&gt;4)-D-glucose + H2O = D-glucose 6-phosphate + D-glucose. In terms of biological role, catalyzes the hydrolysis of aryl-phospho-beta-D-glucosides such as 4-methylumbelliferyl-phospho-beta-D-glucopyranoside (MUG-P), phosphoarbutin and phosphosalicin. Plays a major role in the utilization of arbutin or salicin as the sole carbon source. BglA and BglH are the major proteins contributing to hydrolysis of MUG-P by extracts of late-exponential-phase or stationary-phase B.subtilis cells. This chain is Aryl-phospho-beta-D-glucosidase BglA (bglA), found in Bacillus subtilis (strain 168).